Consider the following 1092-residue polypeptide: Rho GTPase-activating protein 7 (1092 aa).

The region spanning 11-78 is the SAM domain; it reads LTQIEAKEAC…LNKCAVMKLE (68 aa). 3 positions are modified to phosphoserine: S86, S89, and S129. Disordered regions lie at residues 121–179, 297–330, 409–434, and 492–553; these read PKQD…DATT, RSVS…TRSL, GPGH…NSSS, and SDEG…SGVG. A compositionally biased stretch (polar residues) spans 130 to 143; the sequence is PDNSRLQSATSHES. Low complexity-rich tracts occupy residues 154–174 and 299–325; these read VASV…AAHS and VSNS…SPVT. The tract at residues 275–448 is focal adhesion-targeting (FAT); sequence QLNCVEISAL…RLSIYDNVPG (174 aa). S322 carries the phosphoserine modification. Positions 415–426 are enriched in basic and acidic residues; sequence LRRENSHDSPKE. A compositionally biased stretch (polar residues) spans 500 to 512; it reads ALDSVSPCPSSPK. A compositionally biased stretch (basic and acidic residues) spans 514–526; the sequence is IHLDVDHDRRTPS. The segment covering 527–536 has biased composition (polar residues); that stretch reads DLDSTGNSLN. The tract at residues 615 to 637 is polybasic cluster (PBR); sequence KHGFSWAVPKFMKRIKVPDYKDR. The Rho-GAP domain maps to 642-848; the sequence is VPLTVNVQRS…HMIAECKKLF (207 aa). Positions 878–1085 constitute an START domain; the sequence is NSDQPADYRH…RDSFSNQNTE (208 aa).

Interacts with EF1A1, facilitates EF1A1 distribution to the membrane periphery and ruffles upon growth factor stimulation and suppresses cell migration. Interacts with tensin TNS1 (via N-terminus); the interaction is decreased by phosphorylation of TNS1. Interacts with TNS3 and PTEN; in resting cells, interacts with TNS3 (via C2 tensin-type domain) but, following growth factor stimulation, TNS3 and PTEN are phosphorylated which leads to weakened interaction with TNS3 and enhanced interaction with PTEN. Interacts (via C-terminus) with tensin TNS4 (via SH2 domain); the interaction is independent of tyrosine phosphorylation of DLC1. Widely expressed with the highest levels in heart, liver and lung.

It localises to the cytoplasm. The protein resides in the cell junction. The protein localises to the focal adhesion. It is found in the membrane. In terms of biological role, functions as a GTPase-activating protein for the small GTPases RHOA, RHOB, RHOC and CDC42, terminating their downstream signaling. This induces morphological changes and detachment through cytoskeletal reorganization, playing a critical role in biological processes such as cell migration and proliferation. Also functions in vivo as an activator of the phospholipase PLCD1. Active DLC1 increases cell migration velocity but reduces directionality. Required for growth factor-induced epithelial cell migration; in resting cells, interacts with TNS3 while PTEN interacts with the p85 regulatory subunit of the PI3K kinase complex but growth factor stimulation induces phosphorylation of TNS3 and PTEN, causing them to change their binding preference so that PTEN interacts with DLC1 and TNS3 interacts with p85. The PTEN-DLC1 complex translocates to the posterior of migrating cells to activate RHOA while the TNS3-p85 complex translocates to the leading edge of migrating cells to promote RAC1 activation. The sequence is that of Rho GTPase-activating protein 7 (Dlc1) from Mus musculus (Mouse).